Here is a 424-residue protein sequence, read N- to C-terminus: Serine--tRNA ligase (424 aa).

229–231 lines the L-serine pocket; the sequence is TAE. ATP-binding positions include 260–262 and Val276; that span reads RTE. Glu283 contacts L-serine. 347 to 350 is an ATP binding site; that stretch reads EVTS. Thr382 lines the L-serine pocket.

This sequence belongs to the class-II aminoacyl-tRNA synthetase family. Type-1 seryl-tRNA synthetase subfamily. Homodimer. The tRNA molecule binds across the dimer.

It is found in the cytoplasm. The catalysed reaction is tRNA(Ser) + L-serine + ATP = L-seryl-tRNA(Ser) + AMP + diphosphate + H(+). It carries out the reaction tRNA(Sec) + L-serine + ATP = L-seryl-tRNA(Sec) + AMP + diphosphate + H(+). It functions in the pathway aminoacyl-tRNA biosynthesis; selenocysteinyl-tRNA(Sec) biosynthesis; L-seryl-tRNA(Sec) from L-serine and tRNA(Sec): step 1/1. In terms of biological role, catalyzes the attachment of serine to tRNA(Ser). Is also able to aminoacylate tRNA(Sec) with serine, to form the misacylated tRNA L-seryl-tRNA(Sec), which will be further converted into selenocysteinyl-tRNA(Sec). The chain is Serine--tRNA ligase from Rubrobacter xylanophilus (strain DSM 9941 / JCM 11954 / NBRC 16129 / PRD-1).